The primary structure comprises 422 residues: 3-phosphoshikimate 1-carboxyvinyltransferase (422 aa).

Residues Lys-21, Ser-22, and Arg-26 each contribute to the 3-phosphoshikimate site. Lys-21 contacts phosphoenolpyruvate. 2 residues coordinate phosphoenolpyruvate: Gly-93 and Arg-121. Residues Ser-166, Ser-167, Gln-168, Ser-194, Asp-310, and Lys-337 each contribute to the 3-phosphoshikimate site. Residue Gln-168 participates in phosphoenolpyruvate binding. The active-site Proton acceptor is the Asp-310. 3 residues coordinate phosphoenolpyruvate: Arg-341, Arg-382, and Lys-407.

Belongs to the EPSP synthase family. In terms of assembly, monomer.

It is found in the cytoplasm. It catalyses the reaction 3-phosphoshikimate + phosphoenolpyruvate = 5-O-(1-carboxyvinyl)-3-phosphoshikimate + phosphate. It participates in metabolic intermediate biosynthesis; chorismate biosynthesis. Catalyzes the transfer of the enolpyruvyl moiety of phosphoenolpyruvate (PEP) to the 5-hydroxyl of shikimate-3-phosphate (S3P) to produce enolpyruvyl shikimate-3-phosphate and inorganic phosphate. The chain is 3-phosphoshikimate 1-carboxyvinyltransferase from Methanoculleus marisnigri (strain ATCC 35101 / DSM 1498 / JR1).